A 225-amino-acid chain; its full sequence is PKHD-type hydroxylase YbiX (225 aa).

Residues 78 to 177 enclose the Fe2OG dioxygenase domain; the sequence is TLSTPLFNRY…RVASFMWIQS (100 aa). The Fe cation site is built by His-96, Asp-98, and His-158. Arg-168 provides a ligand contact to 2-oxoglutarate.

It depends on Fe(2+) as a cofactor. L-ascorbate is required as a cofactor.

The protein is PKHD-type hydroxylase YbiX of Escherichia fergusonii (strain ATCC 35469 / DSM 13698 / CCUG 18766 / IAM 14443 / JCM 21226 / LMG 7866 / NBRC 102419 / NCTC 12128 / CDC 0568-73).